Consider the following 165-residue polypeptide: Cytochrome c-type biogenesis protein CcmE (165 aa).

At 1 to 29 (MSATAEQNARNPKGKGGFARTVSQRKRKR) the chain is on the cytoplasmic side. The chain crosses the membrane as a helical; Signal-anchor for type II membrane protein span at residues 30–50 (LFLIGGALAVLAVAVGLMLTA). Over 51–165 (FNQDIRFFRT…LKKKGVWEGK (115 aa)) the chain is Periplasmic. The heme site is built by histidine 143 and tyrosine 147.

The protein belongs to the CcmE/CycJ family.

It is found in the cell inner membrane. Functionally, heme chaperone required for the biogenesis of c-type cytochromes. Transiently binds heme delivered by CcmC and transfers the heme to apo-cytochromes in a process facilitated by CcmF and CcmH. This chain is Cytochrome c-type biogenesis protein CcmE, found in Brucella abortus (strain S19).